Reading from the N-terminus, the 325-residue chain is UDP-N-acetylenolpyruvoylglucosamine reductase (325 aa).

Positions 40–221 (RTGGLAELFY…RAAMDEVALH (182 aa)) constitute an FAD-binding PCMH-type domain. The active site involves arginine 186. Serine 235 functions as the Proton donor in the catalytic mechanism. Glutamate 305 is an active-site residue.

It belongs to the MurB family. It depends on FAD as a cofactor.

The protein localises to the cytoplasm. It catalyses the reaction UDP-N-acetyl-alpha-D-muramate + NADP(+) = UDP-N-acetyl-3-O-(1-carboxyvinyl)-alpha-D-glucosamine + NADPH + H(+). The protein operates within cell wall biogenesis; peptidoglycan biosynthesis. In terms of biological role, cell wall formation. In Bartonella henselae (strain ATCC 49882 / DSM 28221 / CCUG 30454 / Houston 1) (Rochalimaea henselae), this protein is UDP-N-acetylenolpyruvoylglucosamine reductase.